A 1791-amino-acid chain; its full sequence is Protein TIC 214 (1791 aa).

6 helical membrane-spanning segments follow: residues 19–39 (IINS…FSIG), 68–88 (FIAG…HLAL), 91–111 (PHTI…WNNH), 133–153 (VFLN…SSML), 176–196 (VGWL…LVWI), and 227–247 (IFSI…PSPI). The segment at 1492 to 1511 (ASQVELESDKENKKNPESAL) is disordered. The span at 1498 to 1511 (ESDKENKKNPESAL) shows a compositional bias: basic and acidic residues.

The protein belongs to the TIC214 family. As to quaternary structure, part of the Tic complex.

Its subcellular location is the plastid. The protein resides in the chloroplast inner membrane. Functionally, involved in protein precursor import into chloroplasts. May be part of an intermediate translocation complex acting as a protein-conducting channel at the inner envelope. In Barbarea verna (Land cress), this protein is Protein TIC 214.